The following is a 336-amino-acid chain: Ribose-phosphate pyrophosphokinase (336 aa).

Residues 43–45 (DQE) and 102–103 (RQ) contribute to the ATP site. Mg(2+)-binding residues include His-136 and Asp-178. The active site involves Lys-201. D-ribose 5-phosphate contacts are provided by residues Arg-203, Asp-227, and 231-235 (DTAGT).

Belongs to the ribose-phosphate pyrophosphokinase family. Class I subfamily. In terms of assembly, homohexamer. The cofactor is Mg(2+).

It localises to the cytoplasm. It carries out the reaction D-ribose 5-phosphate + ATP = 5-phospho-alpha-D-ribose 1-diphosphate + AMP + H(+). The protein operates within metabolic intermediate biosynthesis; 5-phospho-alpha-D-ribose 1-diphosphate biosynthesis; 5-phospho-alpha-D-ribose 1-diphosphate from D-ribose 5-phosphate (route I): step 1/1. Involved in the biosynthesis of the central metabolite phospho-alpha-D-ribosyl-1-pyrophosphate (PRPP) via the transfer of pyrophosphoryl group from ATP to 1-hydroxyl of ribose-5-phosphate (Rib-5-P). In Cereibacter sphaeroides (strain KD131 / KCTC 12085) (Rhodobacter sphaeroides), this protein is Ribose-phosphate pyrophosphokinase.